The sequence spans 280 residues: Rhomboid-like protein 11, chloroplastic (280 aa).

The N-terminal 57 residues, 1–57 (MSQLLHLHRLSLPQSSLRFRFPPLHRRRAASSPTNSTQPPLQFRPLTVSRSQITCRF), are a transit peptide targeting the chloroplast. Residues 58–82 (SQSDITPQFELDKAKDNRKPQKRAN) are Stromal-facing. The chain crosses the membrane as a helical span at residues 83–103 (GIFWIILINLGIYLADHFFQV). The Chloroplast intermembrane segment spans residues 104–117 (RGIKSLYLYHNFPA). Residues 118–140 (WYQFVTATFCHANWNHLSSNLFF) traverse the membrane as a helical segment. Over 141–154 (LYIFGKLVEEEEGN) the chain is Stromal. A helical membrane pass occupies residues 155–175 (FGLWLSYLFTGVGANLVSWLV). At 176 to 178 (LPR) the chain is on the chloroplast intermembrane side. The helical transmembrane segment at 179–199 (NAVSVGASGAVFGLFAISVLV) threads the bilayer. Serine 186 functions as the Nucleophile in the catalytic mechanism. The Stromal segment spans residues 200–243 (KMSWDWRKILEVLILGQFVIERVMEAAQASAGLSGTIYGGYSLQ). The helical transmembrane segment at 244–264 (TVNHIAHLSGALVGVVLVWLL) threads the bilayer. Catalysis depends on histidine 250, which acts as the Charge relay system. Topologically, residues 265 to 280 (SKFPSASMDQDVKKSS) are chloroplast intermembrane.

This sequence belongs to the peptidase S54 family. In terms of assembly, homooligomer.

Its subcellular location is the plastid. It localises to the chloroplast inner membrane. In terms of biological role, rhomboid-type serine protease that catalyzes intramembrane proteolysis. May be involved in TIC22 processing during its import. This chain is Rhomboid-like protein 11, chloroplastic, found in Arabidopsis thaliana (Mouse-ear cress).